The primary structure comprises 69 residues: Conotoxin Eb6.19 (69 aa).

A signal peptide spans 1–17 (VLIIAVLFLTACQLTTA). Residues 18–41 (ETYSRGRQKHRARRSTDKNSKWTR) constitute a propeptide that is removed on maturation. 3 disulfides stabilise this stretch: C43–C57, C50–C61, and C56–C68.

This sequence belongs to the conotoxin O1 superfamily. As to expression, expressed by the venom duct.

The protein resides in the secreted. The chain is Conotoxin Eb6.19 (E1) from Conus ebraeus (Hebrew cone).